A 248-amino-acid polypeptide reads, in one-letter code: 2,3-bisphosphoglycerate-dependent phosphoglycerate mutase (248 aa).

Residues 8 to 15 (RHGESTWN), 21 to 22 (TG), arginine 60, 87 to 90 (ERHY), lysine 98, 114 to 115 (RR), and 183 to 184 (GN) each bind substrate. Histidine 9 serves as the catalytic Tele-phosphohistidine intermediate. Glutamate 87 acts as the Proton donor/acceptor in catalysis.

This sequence belongs to the phosphoglycerate mutase family. BPG-dependent PGAM subfamily. In terms of assembly, homodimer.

It catalyses the reaction (2R)-2-phosphoglycerate = (2R)-3-phosphoglycerate. The protein operates within carbohydrate degradation; glycolysis; pyruvate from D-glyceraldehyde 3-phosphate: step 3/5. In terms of biological role, catalyzes the interconversion of 2-phosphoglycerate and 3-phosphoglycerate. The chain is 2,3-bisphosphoglycerate-dependent phosphoglycerate mutase from Paraburkholderia phymatum (strain DSM 17167 / CIP 108236 / LMG 21445 / STM815) (Burkholderia phymatum).